The sequence spans 310 residues: Methionyl-tRNA formyltransferase (310 aa).

110 to 113 (SVLP) is a binding site for (6S)-5,6,7,8-tetrahydrofolate. The disordered stretch occupies residues 283-310 (TVQPPGKKSMNAADWARGARAEDIRRAR). Basic and acidic residues predominate over residues 299 to 310 (RGARAEDIRRAR).

The protein belongs to the Fmt family.

The catalysed reaction is L-methionyl-tRNA(fMet) + (6R)-10-formyltetrahydrofolate = N-formyl-L-methionyl-tRNA(fMet) + (6S)-5,6,7,8-tetrahydrofolate + H(+). Functionally, attaches a formyl group to the free amino group of methionyl-tRNA(fMet). The formyl group appears to play a dual role in the initiator identity of N-formylmethionyl-tRNA by promoting its recognition by IF2 and preventing the misappropriation of this tRNA by the elongation apparatus. The sequence is that of Methionyl-tRNA formyltransferase from Mycolicibacterium gilvum (strain PYR-GCK) (Mycobacterium gilvum (strain PYR-GCK)).